Consider the following 158-residue polypeptide: Developmental pluripotency-associated protein 3 (158 aa).

Disordered regions lie at residues 1–38 (MDEPSEKVDPVVNPETQMYDGSQREDEGDSPDDSEILQ) and 54–78 (SAKPTKYHRRQRVRLQVKSQPVENR). Residues 26–35 (DEGDSPDDSE) are compositionally biased toward acidic residues. Positions 58-68 (TKYHRRQRVRL) are enriched in basic residues.

It localises to the nucleus. Its subcellular location is the cytoplasm. Its function is as follows. Primordial germ cell (PGCs)-specific protein involved in epigenetic chromatin reprogramming in the zygote following fertilization. In zygotes, DNA demethylation occurs selectively in the paternal pronucleus before the first cell division, while the adjacent maternal pronucleus and certain paternally-imprinted loci are protected from this process. Participates in protection of DNA methylation in the maternal pronucleus by preventing conversion of 5mC to 5hmC: specifically recognizes and binds histone H3 dimethylated at 'Lys-9' (H3K9me2) on maternal genome, and protects maternal genome from TET3-mediated conversion to 5hmC and subsequent DNA demethylation. Does not bind paternal chromatin, which is mainly packed into protamine and does not contain much H3K9me2 mark. Also protects imprinted loci that are marked with H3K9me2 in mature sperm from DNA demethylation in early embryogenesis. May be important for the totipotent/pluripotent states continuing through preimplantation development. Also involved in chromatin condensation in oocytogenesis. The chain is Developmental pluripotency-associated protein 3 (Dppa3) from Rattus norvegicus (Rat).